Consider the following 281-residue polypeptide: Small ribosomal subunit protein uS3 (281 aa).

The KH type-2 domain maps to 38-106 (IRRLLSTGLE…QVQLNILEVK (69 aa)). A disordered region spans residues 218-281 (APAGAERARR…VTHEPQIAES (64 aa)). Low complexity predominate over residues 238-256 (SGAAGTTVTGTDAGRAVGG).

Belongs to the universal ribosomal protein uS3 family. Part of the 30S ribosomal subunit. Forms a tight complex with proteins S10 and S14.

Its function is as follows. Binds the lower part of the 30S subunit head. Binds mRNA in the 70S ribosome, positioning it for translation. This is Small ribosomal subunit protein uS3 from Mycobacterium leprae (strain Br4923).